We begin with the raw amino-acid sequence, 335 residues long: Serine/threonine-protein kinase crk1 (335 aa).

The 282-residue stretch at 11–292 folds into the Protein kinase domain; sequence YVKERKVGEG…AQQALEHHYF (282 aa). Residues 17 to 25 and K40 contribute to the ATP site; that span reads VGEGTYAVV. The Proton acceptor role is filled by D133. At S162 the chain carries Phosphoserine. The residue at position 165 (S165) is a Phosphoserine; by CAK. Phosphoserine is present on S318.

The protein belongs to the protein kinase superfamily. CMGC Ser/Thr protein kinase family. CDC2/CDKX subfamily. One of the nine subunits forming the core-TFIIH basal transcription factor. Interacts with mcs2 and tfb3.

It localises to the cytoplasm. The protein resides in the nucleus. The catalysed reaction is [DNA-directed RNA polymerase] + ATP = phospho-[DNA-directed RNA polymerase] + ADP + H(+). Its function is as follows. Protein kinase essential for cell proliferation, where it is required for completion of cytokinesis. Phosphorylates the C-terminal repeat domain (CTD) of RNA polymerase II. This chain is Serine/threonine-protein kinase crk1 (crk1), found in Schizosaccharomyces pombe (strain 972 / ATCC 24843) (Fission yeast).